A 294-amino-acid polypeptide reads, in one-letter code: Small ribosomal subunit protein uS2 (294 aa).

The tract at residues 232–294 (RATGTTEAPE…SAAGEADAAK (63 aa)) is disordered. Over residues 246–259 (EWERELLEGSKSEE) the composition is skewed to basic and acidic residues. A compositionally biased stretch (low complexity) spans 260–294 (AAAPAAAEEAPAAAEEAPAAAEATESAAGEADAAK).

This sequence belongs to the universal ribosomal protein uS2 family.

The polypeptide is Small ribosomal subunit protein uS2 (Arthrobacter sp. (strain FB24)).